The following is a 94-amino-acid chain: Integration host factor subunit beta (94 aa).

This sequence belongs to the bacterial histone-like protein family. In terms of assembly, heterodimer of an alpha and a beta chain.

In terms of biological role, this protein is one of the two subunits of integration host factor, a specific DNA-binding protein that functions in genetic recombination as well as in transcriptional and translational control. The sequence is that of Integration host factor subunit beta from Caulobacter sp. (strain K31).